An 83-amino-acid chain; its full sequence is RNA-binding protein Hfq (83 aa).

One can recognise a Sm domain in the interval 9–68 (DPFLNALRKERIPVSIYLVNGIKLQGQVESFDQFVILLKNTVSQMVYKHAISTVVPSRAL).

It belongs to the Hfq family. In terms of assembly, homohexamer.

Functionally, RNA chaperone that binds small regulatory RNA (sRNAs) and mRNAs to facilitate mRNA translational regulation in response to envelope stress, environmental stress and changes in metabolite concentrations. Also binds with high specificity to tRNAs. This is RNA-binding protein Hfq from Pseudoalteromonas atlantica (strain T6c / ATCC BAA-1087).